Consider the following 284-residue polypeptide: MTTAQFYCQYCTASLLGKKYVLKDDSLFCVTCYDRVFSNYCEECKKPIESDSKDLCYKDRHWHGGCFKCTKCNHSLVEKPFAAKDERLLCTECYSNECSSKCFHCKRTIMPGSRKMEFKGNYWHETCFVCENCRQPIGTKPLISKESGNFCVPCFEKEFAHYCNFCKKVITSGGITFCDQLWHKECFLCSGCRKDLCEEQFMSRDDYPFCVDCYNHLYANKCVACSKPISGLTGAKFICFQDSQWHSECFNCGKCSVSLVGKGFLTQNKEIFCQKCGSGMDSDI.

The C4-type zinc-finger motif lies at 8–32; the sequence is CQYCTASLLGKKYVLKDDSLFCVTC. 4 consecutive LIM zinc-binding domains span residues 39–100, 101–160, 161–220, and 223–283; these read NYCE…ECSS, KCFH…KEFA, HYCN…LYAN, and VACS…MDSD.

In terms of assembly, interacts with CREM (via the third LIM domain). Interacts (via second LIM domain) with SPAG8.

It is found in the nucleus. May be involved in the regulation of spermatogenesis. Stimulates CREM transcriptional activity in a phosphorylation-independent manner. This Macaca fascicularis (Crab-eating macaque) protein is Four and a half LIM domains protein 5 (FHL5).